The primary structure comprises 151 residues: Nucleoside diphosphate kinase (151 aa).

ATP contacts are provided by Lys11, Phe59, Arg87, Arg104, and Asn114. The Pros-phosphohistidine intermediate role is filled by His117.

Belongs to the NDK family. Homotrimer. Mg(2+) serves as cofactor.

It catalyses the reaction a 2'-deoxyribonucleoside 5'-diphosphate + ATP = a 2'-deoxyribonucleoside 5'-triphosphate + ADP. The enzyme catalyses a ribonucleoside 5'-diphosphate + ATP = a ribonucleoside 5'-triphosphate + ADP. Its function is as follows. Major role in the synthesis of nucleoside triphosphates other than ATP. The ATP gamma phosphate is transferred to the NDP beta phosphate via a ping-pong mechanism, using a phosphorylated active-site intermediate. This chain is Nucleoside diphosphate kinase (ndk1), found in Schizosaccharomyces pombe (strain 972 / ATCC 24843) (Fission yeast).